Here is a 605-residue protein sequence, read N- to C-terminus: Pyruvate decarboxylase 1 (605 aa).

2 residues coordinate substrate: Asp67 and His154. The interval 432-514 (DSWFNCQKLR…FLINNGGYTI (83 aa)) is thiamine pyrophosphate binding. Mg(2+)-binding residues include Asp482, Asn509, and Gly511. Residue Glu515 participates in substrate binding.

This sequence belongs to the TPP enzyme family. Homotetramer. Requires a metal cation as cofactor. It depends on thiamine diphosphate as a cofactor.

It catalyses the reaction a 2-oxocarboxylate + H(+) = an aldehyde + CO2. This is Pyruvate decarboxylase 1 (PDC1) from Oryza sativa subsp. japonica (Rice).